The following is a 589-amino-acid chain: Vesicular glutamate transporter 3 (589 aa).

Residues 1 to 76 (MPFKAFDTFK…CHCCGLPKRY (76 aa)) lie on the Cytoplasmic side of the membrane. Residues 40 to 49 (TEEEDNIELN) show a composition bias toward acidic residues. Residues 40 to 61 (TEEEDNIELNEEGRPVQTSRPS) form a disordered region. Residues 77 to 97 (IIAIMSGLGFCISFGIRCNLG) form a helical membrane-spanning segment. Over 98–130 (VAIVEMVNNSTVYVDGKPEIQTAQFNWDPETVG) the chain is Vesicular. Asn106 carries an N-linked (GlcNAc...) asparagine glycan. The chain crosses the membrane as a helical span at residues 131 to 151 (LIHGSFFWGYIMTQIPGGFIS). Topologically, residues 152–153 (NK) are cytoplasmic. Residues 154–174 (FAANRVFGAAIFLTSTLNMFI) form a helical membrane-spanning segment. Residues 175–182 (PSAARVHY) lie on the Vesicular side of the membrane. A helical membrane pass occupies residues 183-203 (GCVMCVRILQGLVEGVTYPAC). Residues 204-221 (HGMWSKWAPPLERSRLAT) lie on the Cytoplasmic side of the membrane. The helical transmembrane segment at 222-242 (TSFCGSYAGAVVAMPLAGVLV) threads the bilayer. Residues 243–249 (QYIGWSS) lie on the Vesicular side of the membrane. The helical transmembrane segment at 250 to 270 (VFYIYGMFGIIWYMFWLLQAY) threads the bilayer. Residues 271–314 (ECPAAHPTISNEEKTYIETSIGEGANVVSLSKFSTPWKRFFTSL) are Cytoplasmic-facing. The helical transmembrane segment at 315–335 (PVYAIIVANFCRSWTFYLLLI) threads the bilayer. At 336-353 (SQPAYFEEVFGFAISKVG) the chain is on the vesicular side. A helical transmembrane segment spans residues 354 to 374 (LLSAVPHMVMTIVVPIGGQLA). Topologically, residues 375 to 390 (DYLRSRQILTTTAVRK) are cytoplasmic. A helical membrane pass occupies residues 391-411 (IMNCGGFGMEATLLLVVGFSH). Topologically, residues 412–413 (TK) are vesicular. A helical transmembrane segment spans residues 414 to 434 (GVAISFLVLAVGFSGFAISGF). The Cytoplasmic segment spans residues 435 to 447 (NVNHLDIAPRYAS). A helical membrane pass occupies residues 448–468 (ILMGISNGVGTLSGMVCPLIV). Over 469–481 (GAMTRHKTREEWQ) the chain is Vesicular. The helical transmembrane segment at 482 to 502 (NVFLIAALVHYSGVIFYGVFA) threads the bilayer. Topologically, residues 503 to 586 (SGEKQEWADP…SYQNEERNFS (84 aa)) are cytoplasmic. A disordered region spans residues 559–589 (KKEWKGQRGATLDEEELTSYQNEERNFSTIS). Over residues 580–589 (NEERNFSTIS) the composition is skewed to basic and acidic residues.

It belongs to the major facilitator superfamily. Sodium/anion cotransporter family. VGLUT subfamily. Expressed in amygdala, cerebellum, hippocampus, medulla, spinal cord and thalamus.

The protein localises to the cytoplasmic vesicle. It is found in the secretory vesicle. It localises to the synaptic vesicle membrane. Its subcellular location is the cell membrane. The protein resides in the synapse. The protein localises to the synaptosome. It catalyses the reaction L-glutamate(out) = L-glutamate(in). The enzyme catalyses 3 Na(+)(out) + phosphate(out) = 3 Na(+)(in) + phosphate(in). It carries out the reaction chloride(in) = chloride(out). With respect to regulation, the L-glutamate uniporter activity exhibits a biphasic dependence on chloride concentration. Chloride channel activity is allosterically activated by lumenal H(+) and Cl(-) leading to synaptic vesicles acidification. The glutamate transport activity is allosterically activated by lumenal H(+) and Cl(-), preventing non-vesicular L-glutamate release. In terms of biological role, multifunctional transporter that transports L-glutamate as well as multiple ions such as chloride, sodium and phosphate. At the synaptic vesicle membrane, mainly functions as an uniporter that mediates the uptake of L-glutamate into synaptic vesicles at presynaptic nerve terminals of excitatory neural cells. The L-glutamate uniporter activity is electrogenic and is driven by the proton electrochemical gradient, mainly by the electrical gradient established by the vacuolar H(+)-ATPase across the synaptic vesicle membrane. In addition, functions as a chloride channel that allows a chloride permeation through the synaptic vesicle membrane that affects the proton electrochemical gradient and promotes synaptic vesicles acidification. At the plasma membrane, following exocytosis, functions as a symporter of Na(+) and phosphate from the extracellular space to the cytoplasm allowing synaptic phosphate homeostasis regulation. The symporter activity is electrogenic. Moreover, operates synergistically with SLC18A3/VACHT under a constant H(+) gradient, thereby allowing striatal vesicular acetylcholine uptake. This is Vesicular glutamate transporter 3 from Homo sapiens (Human).